A 342-amino-acid polypeptide reads, in one-letter code: Biotin synthase (342 aa).

The region spanning Asn-63–Arg-290 is the Radical SAM core domain. Cys-78, Cys-82, and Cys-85 together coordinate [4Fe-4S] cluster. Residues Cys-122, Cys-153, Cys-213, and Arg-285 each coordinate [2Fe-2S] cluster.

The protein belongs to the radical SAM superfamily. Biotin synthase family. In terms of assembly, homodimer. [4Fe-4S] cluster is required as a cofactor. Requires [2Fe-2S] cluster as cofactor.

It carries out the reaction (4R,5S)-dethiobiotin + (sulfur carrier)-SH + 2 reduced [2Fe-2S]-[ferredoxin] + 2 S-adenosyl-L-methionine = (sulfur carrier)-H + biotin + 2 5'-deoxyadenosine + 2 L-methionine + 2 oxidized [2Fe-2S]-[ferredoxin]. The protein operates within cofactor biosynthesis; biotin biosynthesis; biotin from 7,8-diaminononanoate: step 2/2. Functionally, catalyzes the conversion of dethiobiotin (DTB) to biotin by the insertion of a sulfur atom into dethiobiotin via a radical-based mechanism. The sequence is that of Biotin synthase from Cupriavidus pinatubonensis (strain JMP 134 / LMG 1197) (Cupriavidus necator (strain JMP 134)).